A 218-amino-acid chain; its full sequence is MEPGFWHEKWHQQQIGFHQQDINPFLVKYWQKLGLPADTQVFVPLCGKSLDMCFLAEQGHQVIGCELNELAVQQFFSDIQLEMTQTTVGEHQHYHTEQISLYQGDIFTLPKAITQEVTAFYDRAALIAWPECMRAQYAKQLASLLPSGSVGLLVTLDYPQEALSGPPFAVSPTWVEQHLSDDFDIGVLASQDVLADNPRFIKKAVPWLNEAAYLLKRK.

S-adenosyl-L-methionine contacts are provided by Trp10, Leu45, Glu66, and Arg123.

This sequence belongs to the class I-like SAM-binding methyltransferase superfamily. TPMT family.

The protein resides in the cytoplasm. The catalysed reaction is S-adenosyl-L-methionine + a thiopurine = S-adenosyl-L-homocysteine + a thiopurine S-methylether.. This is Thiopurine S-methyltransferase from Shewanella baltica (strain OS195).